We begin with the raw amino-acid sequence, 324 residues long: tRNA N6-adenosine threonylcarbamoyltransferase (324 aa).

Fe cation contacts are provided by His107, His111, and Tyr127. Residues 127–131 (YVSGG), Asp159, Gly172, Glu176, and Asn257 contribute to the substrate site. Asp285 lines the Fe cation pocket.

It belongs to the KAE1 / TsaD family. As to quaternary structure, monomer. Component of the KEOPS complex that consists of Kae1, Bud32, Cgi121 and Pcc1; the whole complex dimerizes. Fe(2+) serves as cofactor.

The protein resides in the cytoplasm. It catalyses the reaction L-threonylcarbamoyladenylate + adenosine(37) in tRNA = N(6)-L-threonylcarbamoyladenosine(37) in tRNA + AMP + H(+). Its function is as follows. Required for the formation of a threonylcarbamoyl group on adenosine at position 37 (t(6)A37) in tRNAs that read codons beginning with adenine. Is a component of the KEOPS complex that is probably involved in the transfer of the threonylcarbamoyl moiety of threonylcarbamoyl-AMP (TC-AMP) to the N6 group of A37. Kae1 likely plays a direct catalytic role in this reaction, but requires other protein(s) of the complex to fulfill this activity. This Pyrococcus horikoshii (strain ATCC 700860 / DSM 12428 / JCM 9974 / NBRC 100139 / OT-3) protein is tRNA N6-adenosine threonylcarbamoyltransferase.